Here is a 299-residue protein sequence, read N- to C-terminus: Protoheme IX farnesyltransferase (299 aa).

9 helical membrane-spanning segments follow: residues 29 to 49 (VVTL…PGAV), 51 to 71 (LQPL…AAAM), 100 to 120 (HAAT…YWLV), 123 to 143 (LTAW…TAYL), 150 to 170 (NIVI…TAVT), 177 to 197 (GLLL…ALAI), 223 to 243 (CIFL…LVGM), 244 to 264 (SGAL…YKAW), and 275 to 295 (AMDV…LLLV).

This sequence belongs to the UbiA prenyltransferase family. Protoheme IX farnesyltransferase subfamily.

The protein resides in the cell inner membrane. It catalyses the reaction heme b + (2E,6E)-farnesyl diphosphate + H2O = Fe(II)-heme o + diphosphate. It functions in the pathway porphyrin-containing compound metabolism; heme O biosynthesis; heme O from protoheme: step 1/1. Converts heme B (protoheme IX) to heme O by substitution of the vinyl group on carbon 2 of heme B porphyrin ring with a hydroxyethyl farnesyl side group. This Shewanella amazonensis (strain ATCC BAA-1098 / SB2B) protein is Protoheme IX farnesyltransferase.